Reading from the N-terminus, the 212-residue chain is Ribonuclease HII (212 aa).

An RNase H type-2 domain is found at Met1–Gln206. 3 residues coordinate a divalent metal cation: Asp6, Glu7, and Asp101.

The protein belongs to the RNase HII family. Mn(2+) is required as a cofactor. Mg(2+) serves as cofactor.

It localises to the cytoplasm. The enzyme catalyses Endonucleolytic cleavage to 5'-phosphomonoester.. Endonuclease that specifically degrades the RNA of RNA-DNA hybrids. The protein is Ribonuclease HII of Methanospirillum hungatei JF-1 (strain ATCC 27890 / DSM 864 / NBRC 100397 / JF-1).